Reading from the N-terminus, the 257-residue chain is Transcription factor LBX2 (257 aa).

A disordered region spans residues 1-43; sequence MTSSSKDMKAGSVLQSSGEERRRGPLDQLPPPANSNKPLTPFS. Residues 1 to 46 form a required for convergent extension movement and hypaxial myogenesis during gastrulation. Required for the formation of thick and thin myofilaments. Required for myod1 expression in the pectoral fin bud. Required for continuous expression of cxcl12a in the posterior lateral mesoderm at the tail bud stage and in adaxial cells at the 10-somite stage region; the sequence is MTSSSKDMKAGSVLQSSGEERRRGPLDQLPPPANSNKPLTPFSIED. The segment at residues 126 to 185 is a DNA-binding region (homeobox); sequence RRKSRTAFTNHQIYELEKRFLYQKYLSPADRDQIAQQLGLTNAQVITWFQNRRAKLKRDL. The tract at residues 206-257 is disordered; it reads LVSMEDMEDAHGGSGPISPSLSPRAFPQSPSSSRGQTTDEFSEEDEEIEVDD. The segment covering 233-243 has biased composition (polar residues); that stretch reads QSPSSSRGQTT. A compositionally biased stretch (acidic residues) spans 245–257; that stretch reads EFSEEDEEIEVDD.

As to quaternary structure, interacts (via N-terminus) with tle3a/gro2 (via C-terminus).

It localises to the nucleus. Functionally, transcription factor required in several developmental processes. Involved in axis formation during embryonic development by inhibiting tle3a/gro2 from binding to tcf7l1a, thereby facilitating ctnnb1-mediated transcription of canonical Wnt/CTNNB1 signaling target genes. Regulates convergent extension movements and hypaxial myogenesis during gastrulation by activating non-canonical Wnt signaling via wnt5b. Required for the formation of myofibrils and fusion of fast muscle precursor cells, potentially via transcriptional regulation of genes specific to thick and thin myofilaments. Regulates the migration of the posterior lateral line primordium during embryonic development, possibly via regulation of cxcl12a/sdf1a expression in the posterior lateral mesoderm, thereby modulating the deposition of neuromasts at correct intervals. This is Transcription factor LBX2 from Danio rerio (Zebrafish).